The primary structure comprises 402 residues: Speedy protein E2 (402 aa).

The tract at residues 1–89 (MDRTETRFRK…EEPEKELAPE (89 aa)) is disordered. Residues 16-39 (GKITTSRQPHPQNEQSPQRSTSGY) are compositionally biased toward polar residues. Residues 76–89 (DESEEEPEKELAPE) are compositionally biased toward acidic residues.

It belongs to the Speedy/Ringo family.

In Homo sapiens (Human), this protein is Speedy protein E2 (SPDYE2).